The sequence spans 187 residues: uncharacterized protein (187 aa).

This is an uncharacterized protein from Saccharomyces cerevisiae (strain ATCC 204508 / S288c) (Baker's yeast).